A 638-amino-acid polypeptide reads, in one-letter code: RNA exonuclease 3 (638 aa).

The tract at residues 37–136 (AQDQVLEQKE…PPRRAPKEAL (100 aa)) is disordered. Positions 55–76 (LKLEPRPEAKETPKDDLRHVSD) are enriched in basic and acidic residues. Residues 77–111 (SGRSTPVKKTTAPATNAENISPVSRQPNIPKNTAT) are compositionally biased toward polar residues. The region spanning 408–584 (ICFDCEMGYT…VEDALATGDL (177 aa)) is the Exonuclease domain. The segment covering 612–622 (DSSSNTVSMQT) has biased composition (polar residues). The disordered stretch occupies residues 612–638 (DSSSNTVSMQTKLGEGAGAKRAREGTS).

This sequence belongs to the REXO1/REXO3 family.

Its subcellular location is the cytoplasm. The protein localises to the nucleus. Functionally, 3' to 5' exoribonuclease required for proper 3' end maturation of MRP RNA and of the U5L snRNA. This is RNA exonuclease 3 (rex3) from Emericella nidulans (strain FGSC A4 / ATCC 38163 / CBS 112.46 / NRRL 194 / M139) (Aspergillus nidulans).